Here is a 301-residue protein sequence, read N- to C-terminus: MDLRDIDLNLLVVFNQLLLDRSVSTAGEKLGLTQPAVSNSLKRLRAALKDDLFLRTSKGMEPTPYALHLAEPVIYALNTLQTALTTRDSFDPFASTRTFNLAMTDIGEMYFMPPLMEALAQRAPHIQISTLRPNAGNLKEDMESGAVDLALGLLPELQTGFFQRRLFRHRYVCMFRKDHPSAKSPMSLKQFSELEHVGVVALNTGHGEVDGLLERAGIKRRMRLVVPHFIAIGPILHSTDLIATVPQRFAVRCEVPFGLTTSPHPAKLPDIAINLFWHAKYNRDPGNMWLRQLFVELFSEA.

The HTH lysR-type domain maps to isoleucine 6–threonine 63. The H-T-H motif DNA-binding region spans valine 23–lysine 42.

It belongs to the LysR transcriptional regulatory family.

In terms of biological role, may regulate the expression of the naphthalene (nagA-F) and salicylate (nagG-M) metabolism genes. This chain is HTH-type transcriptional activator NagR, found in Ralstonia sp.